The chain runs to 91 residues: Teretoxin Tan22.13 (91 aa).

An N-terminal signal peptide occupies residues 1–21 (MKVQILFALMMVLVTLCLGQK). A propeptide spanning residues 22 to 24 (MQR) is cleaved from the precursor.

The protein belongs to the teretoxin C (TC) superfamily. Contains 4 disulfide bonds. Expressed by the venom duct.

It is found in the secreted. The chain is Teretoxin Tan22.13 from Terebra anilis (Auger snail).